The primary structure comprises 510 residues: ETS translocation variant 5 (510 aa).

Residues K132 to R245 are disordered. Positions T163 to P174 are enriched in low complexity. The span at Q211–E224 shows a compositional bias: polar residues. Residue S248 is modified to Phosphoserine. K350 participates in a covalent cross-link: Glycyl lysine isopeptide (Lys-Gly) (interchain with G-Cter in SUMO2). Residues L368 to V448 constitute a DNA-binding region (ETS).

It belongs to the ETS family. In terms of assembly, interacts (via C-terminal) with ZMYM5 (via N-terminal 120 amino acid region). In terms of tissue distribution, in the brain, expressed predominantly in the cerebral cortex, the amygdala and the hypothalamus. Within the cerebral cortex, there is conspicuously high expression in cortical layers 2, 4 and 6 while expression is almost absent from layers 1, 3 and 5. High expression is also observed in the dorsal and ventral endopiriform claustrum. Strong expression is observed in limited parts of the amygdala including the basolateral amygdaloid nucleus, the bed stria terminalis and the central amygdaloid nucleus. Low to moderate levels are found in the hypothalamus while expression is almost absent in the thalamus. Hypothalamic expression is seen in the dorsomedial hypothalamic nucleus and also the central, dorsomedial and ventrolateral parts of the ventromedial hypothalamic nucleus. Strong expression is also identified in the nigrostriatal tract. In the mesencephalon, expression is restricted to the ventral tegmental area including the parabrachial pigmented nucleus. In the hippocampus, strongly expressed in the pyramidal cell layer. Some expression is also found in the lacunosum moleculare layer. Low levels of expression in the cerebellum, including the granular, molecular and Purkinje cell layers.

The protein localises to the nucleus. Its function is as follows. Binds to DNA sequences containing the consensus nucleotide core sequence 5'-GGAA.-3'. The polypeptide is ETS translocation variant 5 (Etv5) (Mus musculus (Mouse)).